We begin with the raw amino-acid sequence, 412 residues long: Citrate synthase (412 aa).

Active-site residues include His305 and Asp364.

It belongs to the citrate synthase family.

It carries out the reaction oxaloacetate + acetyl-CoA + H2O = citrate + CoA + H(+). It functions in the pathway carbohydrate metabolism; tricarboxylic acid cycle; isocitrate from oxaloacetate: step 1/2. In Rickettsia bellii, this protein is Citrate synthase (gltA).